We begin with the raw amino-acid sequence, 389 residues long: Tryptophan 2,3-dioxygenase (389 aa).

Residues 60-64 and arginine 131 each bind substrate; that span reads FIITH. Histidine 316 contributes to the heme binding site. A substrate-binding site is contributed by threonine 331.

Belongs to the tryptophan 2,3-dioxygenase family. In terms of assembly, homotetramer. Dimer of dimers. The cofactor is heme.

The enzyme catalyses L-tryptophan + O2 = N-formyl-L-kynurenine. It participates in amino-acid degradation; L-tryptophan degradation via kynurenine pathway; L-kynurenine from L-tryptophan: step 1/2. The protein operates within pigment biosynthesis; ommochrome biosynthesis. In terms of biological role, heme-dependent dioxygenase that catalyzes the oxidative cleavage of the L-tryptophan (L-Trp) pyrrole ring and converts L-tryptophan to N-formyl-L-kynurenine. Catalyzes the oxidative cleavage of the indole moiety. This Mayetiola destructor (Hessian fly) protein is Tryptophan 2,3-dioxygenase.